The following is a 299-amino-acid chain: Heterodisulfide reductase subunit B-like protein (299 aa).

Belongs to the HdrB family. In terms of assembly, the heterodisulfide reductase is composed of three subunits; HdlA, HdlB and HdlC. It forms a complex with the F420-non-reducing hydrogenase (Mvh), which provides the reducing equivalents to the heterodisulfide reductase.

The protein localises to the cytoplasm. Has oxidoreductase activity. The Hdl and Mvh subunits may together mediate electron transfer from hydrogen to an unidentified electron acceptor on the cytoplasmic side of the membrane. This chain is Heterodisulfide reductase subunit B-like protein (hdlB), found in Archaeoglobus profundus (strain DSM 5631 / JCM 9629 / NBRC 100127 / Av18).